We begin with the raw amino-acid sequence, 1122 residues long: Telomerase reverse transcriptase (1122 aa).

Positions 1–239 (MTRAPRCPAV…TKRHLSLTST (239 aa)) are RNA-interacting domain 1. The GQ motif stretch occupies residues 58 to 205 (MHWGSQPPPA…RPVGRNFTNL (148 aa)). The tract at residues 137–141 (WMLLL) is required for regulating specificity for telomeric DNA and for processivity for primer elongation. Residues 213–296 (SSSRQEAPKP…KDLSSKGKVS (84 aa)) form a disordered region. Residues 240-328 (SVPSAKKARC…PRQNAFQLRP (89 aa)) are linker. The segment covering 284–295 (TAEKDLSSKGKV) has biased composition (basic and acidic residues). Positions 306 to 528 (CKHKPSSTSL…VPAAEHRLRE (223 aa)) are required for oligomerization. The segment at 329-540 (FIETRHFLYS…LATFLFWLMD (212 aa)) is RNA-interacting domain 2. Residues 332–337 (TRHFLY) carry the TFLY; involved in RNA binding motif. The segment at 381–511 (LCRTHRLSRR…MKVEDCHWLR (131 aa)) is QFP motif. The tract at residues 402 to 422 (LVNHAECQYVRLLRSHCRFRT) is CP motif. A Phosphoserine; by DYRK2 modification is found at S447. The Reverse transcriptase domain maps to 595-928 (EVRHHQDTWL…CLFPWCGLLL (334 aa)). Y697 is modified (phosphotyrosine; by SRC-type Tyr-kinases). Residues D702, D861, and D862 each coordinate Mg(2+). The required for oligomerization stretch occupies residues 907 to 921 (LGGAAPYQLPAHCLF). A primer grip sequence region spans residues 923–927 (WCGLL). A CTE region spans residues 929–1122 (DTQTLEVFCD…LSTDFQTILD (194 aa)).

The protein belongs to the reverse transcriptase family. Telomerase subfamily. As to quaternary structure, catalytic component of the telomerase holoenzyme complex composed of one molecule of TERT, one molecule of WRAP53/TCAB1, two molecules of H/ACA ribonucleoprotein complex subunits DKC1, NOP10, NHP2 and GAR1, and a telomerase RNA template component (TERC). The telomerase holoenzyme complex is associated with TEP1, SMG6/EST1A and POT1. The molecular chaperone HSP90/P23 complex is required for correct assembly and stabilization of the active telomerase. Interacts directly with HSP90A and PTGES3. Interacts with HSPA1A; the interaction occurs in the absence of TERC and dissociates once the complex has formed. Interacts with RAN; the interaction promotes nuclear export of TERT. Interacts with XPO1. Interacts with PTPN11; the interaction retains TERT in the nucleus. Interacts with NCL (via RRM1 and C-terminal RRM4/Arg/Gly-rich domains); the interaction is important for nucleolar localization of TERT. Interacts with SMARCA4 (via the bromodomain); the interaction regulates Wnt-mediated signaling. Interacts with MCRS1 (isoform MCRS2); the interaction inhibits in vitro telomerase activity. Interacts with PIF1; the interaction has no effect on the elongation activity of TERT. Interacts with PML; the interaction recruits TERT to PML bodies and inhibits telomerase activity. Interacts with GNL3L. Interacts with isoform 1 and isoform 2 of NVL. Interacts with DHX36. Interacts with ATF7. Post-translationally, phosphorylation at Tyr-697 under oxidative stress leads to translocation of TERT to the cytoplasm and reduces its antiapoptotic activity. Dephosphorylated by SHP2/PTPN11 leading to nuclear retention. Phosphorylation by the AKT pathway promotes nuclear location. Phosphorylation at the G2/M phase at Ser-447 by DYRK2 promotes ubiquitination by the EDVP complex and degradation. Ubiquitinated by the EDVP complex, a E3 ligase complex following phosphorylation at Ser-447 by DYRK2. Ubiquitinated leads to proteasomal degradation. As to expression, high activity in intestine, liver and testis, moderate in lung, very low in muscle, heart and brain.

It is found in the nucleus. It localises to the nucleolus. The protein resides in the nucleoplasm. The protein localises to the chromosome. Its subcellular location is the telomere. It is found in the cytoplasm. It localises to the PML body. It catalyses the reaction DNA(n) + a 2'-deoxyribonucleoside 5'-triphosphate = DNA(n+1) + diphosphate. Its function is as follows. Telomerase is a ribonucleoprotein enzyme essential for the replication of chromosome termini in most eukaryotes. Active in progenitor and cancer cells. Inactive, or very low activity, in normal somatic cells. Catalytic component of the teleromerase holoenzyme complex whose main activity is the elongation of telomeres by acting as a reverse transcriptase that adds simple sequence repeats to chromosome ends by copying a template sequence within the RNA component of the enzyme. Catalyzes the RNA-dependent extension of 3'-chromosomal termini with the 6-nucleotide telomeric repeat unit, 5'-TTAGGG-3'. The catalytic cycle involves primer binding, primer extension and release of product once the template boundary has been reached or nascent product translocation followed by further extension. More active on substrates containing 2 or 3 telomeric repeats. Telomerase activity is regulated by a number of factors including telomerase complex-associated proteins, chaperones and polypeptide modifiers. Modulates Wnt signaling. Plays important roles in aging and antiapoptosis. The polypeptide is Telomerase reverse transcriptase (Tert) (Mus musculus (Mouse)).